The following is a 390-amino-acid chain: Succinyl-diaminopimelate desuccinylase (390 aa).

H75 serves as a coordination point for Zn(2+). D77 is an active-site residue. D108 is a Zn(2+) binding site. E141 acts as the Proton acceptor in catalysis. The Zn(2+) site is built by E142, E170, and H359.

This sequence belongs to the peptidase M20A family. DapE subfamily. As to quaternary structure, homodimer. It depends on Zn(2+) as a cofactor. Requires Co(2+) as cofactor.

The enzyme catalyses N-succinyl-(2S,6S)-2,6-diaminopimelate + H2O = (2S,6S)-2,6-diaminopimelate + succinate. The protein operates within amino-acid biosynthesis; L-lysine biosynthesis via DAP pathway; LL-2,6-diaminopimelate from (S)-tetrahydrodipicolinate (succinylase route): step 3/3. Its function is as follows. Catalyzes the hydrolysis of N-succinyl-L,L-diaminopimelic acid (SDAP), forming succinate and LL-2,6-diaminopimelate (DAP), an intermediate involved in the bacterial biosynthesis of lysine and meso-diaminopimelic acid, an essential component of bacterial cell walls. This Maricaulis maris (strain MCS10) (Caulobacter maris) protein is Succinyl-diaminopimelate desuccinylase.